Reading from the N-terminus, the 840-residue chain is MDDLLKVPEIVTNIASYLSTVDYLSFQQVNKRVYAIINGKNDSKYWSLKLTRMGLQQVHSNEEEEITLLDENDNQNSLRIFEIYKSFTAQNSKKIFVKFYRCYNSYARKLYNNNLANFFPTSYSNDPLKQTRILNFIKKYNFSNKNDIETFTRIETNFNILREIFINSVLKESELNYQSNNLAAVARFMKILLISNEESNAIEFFKSKADLPPSLTVLPSNDELFWAEQPREEDSGGSTVIFNSKNLDTFLNQLRDFLNEKIKLADILFKDEFPVILQFIESFIQDILLDILNNILLSYSEFLKENGKDSKANYECVPELYFTFIKKFDTELNDSVNAGANFRKVVRDLLNLYLEPFVVNYMNQTTRVFESLINSQLANYDTQVQDKQREQNAKIYNTLKDQTDASSASNNELPNDLSIITETSKTVPEADSKPSTIHQSVHSTDISNDKLDFLSSFTKIFKFSNNENQRLKQQLQLAYNLNLISNNLQNIKSLISLDLCYKILQETSEKTDQIYKFHTIESLLPLIKLRCQEIFKILITQLNKNHVKPAFEKAILLLQKYNPNEIEQIEIKFNSLSPANTQVEPLVQFTELINIGDIILQMISIFYKNELIPKKIIDKNKDFLNDVIQLKKNFETSIDDFVAEGLNIGINKLMDEISFVFKTLQLPDDYNPPPPSRNSPIRDIKPTKCAIRVVELLSNHCFLLTGATDKGTIDVYQQEIGERFFNEIVKHLKKCFISTEGAIWLICDLNYFYDFIANKLKQKNVVPYFVGLKSIGQLYIISGKDSKELGKLISDLGKFNGIFTQEEIYEFVQRRSDWVRVRKDVEKVMYGLGIRDCCIM.

The F-box domain maps to 1–48 (MDDLLKVPEIVTNIASYLSTVDYLSFQQVNKRVYAIINGKNDSKYWSL). S409 bears the Phosphoserine mark.

As to quaternary structure, interacts with SKP1.

The protein resides in the cytoplasm. It localises to the bud neck. It is found in the cell tip. Its function is as follows. Involved in recycling plasma membrane proteins internalized by endocytosis. Required for recycling of the v-SNARE SNC1. This is Recyclin-1 (RCY1) from Saccharomyces cerevisiae (strain ATCC 204508 / S288c) (Baker's yeast).